A 155-amino-acid polypeptide reads, in one-letter code: 6,7-dimethyl-8-ribityllumazine synthase (155 aa).

Residues F23, 57–59 (AFE), and 83–85 (AVI) each bind 5-amino-6-(D-ribitylamino)uracil. 88–89 (AT) provides a ligand contact to (2S)-2-hydroxy-3-oxobutyl phosphate. H91 serves as the catalytic Proton donor. 5-amino-6-(D-ribitylamino)uracil is bound at residue F114. R128 contacts (2S)-2-hydroxy-3-oxobutyl phosphate.

This sequence belongs to the DMRL synthase family.

The enzyme catalyses (2S)-2-hydroxy-3-oxobutyl phosphate + 5-amino-6-(D-ribitylamino)uracil = 6,7-dimethyl-8-(1-D-ribityl)lumazine + phosphate + 2 H2O + H(+). Its pathway is cofactor biosynthesis; riboflavin biosynthesis; riboflavin from 2-hydroxy-3-oxobutyl phosphate and 5-amino-6-(D-ribitylamino)uracil: step 1/2. Its function is as follows. Catalyzes the formation of 6,7-dimethyl-8-ribityllumazine by condensation of 5-amino-6-(D-ribitylamino)uracil with 3,4-dihydroxy-2-butanone 4-phosphate. This is the penultimate step in the biosynthesis of riboflavin. The protein is 6,7-dimethyl-8-ribityllumazine synthase of Leptospira biflexa serovar Patoc (strain Patoc 1 / Ames).